The primary structure comprises 253 residues: 5'/3'-nucleotidase SurE (253 aa).

Residues Asp8, Asp9, Ser39, and Asn92 each contribute to the a divalent metal cation site.

Belongs to the SurE nucleotidase family. Requires a divalent metal cation as cofactor.

The protein resides in the cytoplasm. It catalyses the reaction a ribonucleoside 5'-phosphate + H2O = a ribonucleoside + phosphate. The catalysed reaction is a ribonucleoside 3'-phosphate + H2O = a ribonucleoside + phosphate. The enzyme catalyses [phosphate](n) + H2O = [phosphate](n-1) + phosphate + H(+). Nucleotidase with a broad substrate specificity as it can dephosphorylate various ribo- and deoxyribonucleoside 5'-monophosphates and ribonucleoside 3'-monophosphates with highest affinity to 3'-AMP. Also hydrolyzes polyphosphate (exopolyphosphatase activity) with the preference for short-chain-length substrates (P20-25). Might be involved in the regulation of dNTP and NTP pools, and in the turnover of 3'-mononucleotides produced by numerous intracellular RNases (T1, T2, and F) during the degradation of various RNAs. The chain is 5'/3'-nucleotidase SurE from Shigella flexneri serotype 5b (strain 8401).